We begin with the raw amino-acid sequence, 305 residues long: Peroxisome assembly protein 26 (305 aa).

The segment at 1–25 is disordered; sequence MKSDCSTSAAPFRGLGGPLRSSEPV. Residues 1 to 246 are Cytoplasmic-facing; the sequence is MKSDCSTSAA…RQLWDSAVSH (246 aa). A helical; Signal-anchor for type II membrane protein transmembrane segment spans residues 247–267; the sequence is FFSLPFKKSLLAALILCLLVV. The Peroxisomal matrix portion of the chain corresponds to 268-305; it reads RFDPASPSSLPSLYKLAQLFRWIRKAASSRLYQLRIRD.

This sequence belongs to the peroxin-26 family. As to quaternary structure, interacts (via its cytoplasmic domain) with PEX6; interaction is direct and is ATP-dependent. Interacts with PEX1; interaction is indirect and is mediated via interaction with PEX6.

The protein resides in the peroxisome membrane. Its function is as follows. Peroxisomal docking factor that anchors PEX1 and PEX6 to peroxisome membranes. PEX26 is therefore required for the formation of the PEX1-PEX6 AAA ATPase complex, a complex that mediates the extraction of the PEX5 receptor from peroxisomal membrane. This chain is Peroxisome assembly protein 26 (PEX26), found in Macaca fascicularis (Crab-eating macaque).